We begin with the raw amino-acid sequence, 127 residues long: Aspartate 1-decarboxylase (127 aa).

S25 serves as the catalytic Schiff-base intermediate with substrate; via pyruvic acid. S25 is subject to Pyruvic acid (Ser). T57 is a substrate binding site. Y58 acts as the Proton donor in catalysis. 73-75 (GAA) contacts substrate.

Belongs to the PanD family. As to quaternary structure, heterooctamer of four alpha and four beta subunits. Pyruvate serves as cofactor. Post-translationally, is synthesized initially as an inactive proenzyme, which is activated by self-cleavage at a specific serine bond to produce a beta-subunit with a hydroxyl group at its C-terminus and an alpha-subunit with a pyruvoyl group at its N-terminus.

The protein localises to the cytoplasm. It carries out the reaction L-aspartate + H(+) = beta-alanine + CO2. Its pathway is cofactor biosynthesis; (R)-pantothenate biosynthesis; beta-alanine from L-aspartate: step 1/1. Its function is as follows. Catalyzes the pyruvoyl-dependent decarboxylation of aspartate to produce beta-alanine. The chain is Aspartate 1-decarboxylase from Trichormus variabilis (strain ATCC 29413 / PCC 7937) (Anabaena variabilis).